The sequence spans 500 residues: Maturase K (500 aa).

The protein belongs to the intron maturase 2 family. MatK subfamily.

The protein resides in the plastid. It is found in the chloroplast. Functionally, usually encoded in the trnK tRNA gene intron. Probably assists in splicing its own and other chloroplast group II introns. This is Maturase K from Fragaria vesca (Woodland strawberry).